The primary structure comprises 182 residues: MPLLNSLATPYADALLQVTDVRQESEEVANQCKDLLSAWESSEPLRDAMTSPVLEPEAKKKALTSLLSEQVTPSLMNLLKVLADRQRLPALEAVLLRYLELYRESRNIALAHVRAAQPLTEEQQAALTTKVQSMAGTNAVEIDLKVDPSLIGGFVVNLGSQVIDASLSGQVRRLGLALAKAS.

It belongs to the ATPase delta chain family. In terms of assembly, F-type ATPases have 2 components, F(1) - the catalytic core - and F(0) - the membrane proton channel. F(1) has five subunits: alpha(3), beta(3), gamma(1), delta(1), epsilon(1). CF(0) has four main subunits: a(1), b(1), b'(1) and c(10-14). The alpha and beta chains form an alternating ring which encloses part of the gamma chain. F(1) is attached to F(0) by a central stalk formed by the gamma and epsilon chains, while a peripheral stalk is formed by the delta, b and b' chains.

Its subcellular location is the cellular thylakoid membrane. Its function is as follows. F(1)F(0) ATP synthase produces ATP from ADP in the presence of a proton or sodium gradient. F-type ATPases consist of two structural domains, F(1) containing the extramembraneous catalytic core and F(0) containing the membrane proton channel, linked together by a central stalk and a peripheral stalk. During catalysis, ATP synthesis in the catalytic domain of F(1) is coupled via a rotary mechanism of the central stalk subunits to proton translocation. In terms of biological role, this protein is part of the stalk that links CF(0) to CF(1). It either transmits conformational changes from CF(0) to CF(1) or is implicated in proton conduction. The protein is ATP synthase subunit delta of Synechococcus sp. (strain CC9311).